The chain runs to 1856 residues: MSRKSIGEKRHSFSMRKLSVGLVSVTVSSFFLMSQGIQSVSADNMESPIHYKYMTEGKLTDEEKSLLVEALPQLAEESDDTYYLVYRSQQFLPNTGFNPTVGTFLFTAGLSLLVLLVSKRENGKKRLVHFLLLTSMGVQLLPASAFGLTSQILSAYNSQLSIGVGEHLPEPLKIEGYQYIGYIKTKKQDNTELSRTVDGKYSAQRDSQPNSTKTSDVVHSADLEWNQGQGKVSLQGEASGDDGLSEKSSIAADNLSSNDSFASQVEQNPDHKGESVVRPTVPEQGNPVSATTVQSAEEEVLATTNDRPEYKLPLETKGTQEPGHEGEAAVREDLPVYTKPLETKGTQGPGHEGEAAVREEEPAYTEPLATKGTQEPGHEGKATVREETLEYTEPVATKGTQEPEHEGEAAVEEELPALEVTTRNRTEIQNIPYTTEEIQDPTLLKNRRKIERQGQAGTRTIQYEDYIVNGNVVETKEVSRTEVAPVNEVVKVGTLVKVKPTVEITNLTKVENKKSITVSYNLIDTTSAYVSAKTQVFHGDKLVKEVDIENPAKEQVISGLDYYTPYTVKTHLTYNLGENNEENTETSTQDFQLEYKKIEIKDIDSVELYGKENDRYRRYLSLSEAPTDTAKYFVKVKSDRFKEMYLPVKSITENTDGTYKVTVAVDQLVEEGTDGYKDDYTFTVAKSKAEQPGVYTSFKQLVTAMQSNLSGVYTLASDMTADEVSLGDKQTSYLTGAFTGSLIGSDGTKSYAIYDLKKPLFDTLNGATVRDLDIKTVSADSKENVAALAKAANSANINNVAVEGKISGAKSVAGLVASATNTVIENSSFTGKLIANHQDSNKNDTGGIVGNITGNSSRVNKVRVDALISTNARNNNQTAGGIVGRLENGALISNSVATGEIRNGQGYSRVGGIVGSTWQNGRVNNVVSNVDVGDGYVITGDQYAAADVKNASTSVDNRKADRFATKLSKDQIDAKVADYGITVTLDDTGQDLKRNLREVDYTRLNKAEAERKVAYSNIEKLMPFYNKDLVVHYGNKVATTDKLYTTELLDVVPMKDDEVVTDINNKKNSINKVMLHFKDNTVEYLDVTFKENFINSQVIEYNVTGKEYIFTPEAFVSDYTAITNNVLSDLQNVTLNSEATKKVLGAANDAALDNLYLDRQFEEVKANIAEHLRKVLAMDKSINTTGDGVVEYVSEKIKNNKEAFMLGLTYMNRWYDINYGKMNTKDLSTYKFDFNGNNETSTLDTIVALGNSGLDNLRASNTVGLYANKLASVKGEDSVFDFVEAYRKLFLPNKTNNEWFKENTKAYIVEMKSDIAEVREKQESPTADRKYSLGVYDRISAPSWGHKSMLLPLLTLPEESVYISSNMSTLAFGSYERYRDSVDGVILSGDALRTYVRNRVDIAAKRHRDHYDIWYNLLDSASKEKLFRSVIVYDGFNVKDETGRTYWARLTDKNIGSIKEFFGPVGKWYEYNSSAGAYANGSLTHFVLDRLLDAYGTSVYTHEMVHNSDSAIYFEGNGRREGLGAELYALGLLQSVDSVNSHILALNTLYKAEKDDLNRLHTYNPVERFDSDEALQSYMHGSYDVMYTLDAMEAKAILAQNNDVKKKWFRKIENYYVRDTRHNKDTHAGNKVRPLTDEEVANLTSLNSLIDNDIINRRSYDDSREYKRNGYYTISMFSPVYAALSNSKGAPGDIMFRKIAYELLAEKGYHKGFLPYVSNQYGAEAFASGSKTFSSWHGRDVALVTDDLVFKKVFNGEYSSWADFKKAMFKQRIDKQDNLKPITIQYELGNPNSTKEVTITTAAQMQQLINEAAAKDITNIDRATSHTPASWVHLLKQKIYNAYLRTTDDFRNSIYK.

The signal sequence occupies residues 1 to 42 (MSRKSIGEKRHSFSMRKLSVGLVSVTVSSFFLMSQGIQSVSA). A propeptide spanning residues 43–95 (DNMESPIHYKYMTEGKLTDEEKSLLVEALPQLAEESDDTYYLVYRSQQFLPNT) is cleaved from the precursor. Positions 92–96 (LPNTG) match the LPXTG sorting signal motif. Thr95 bears the Pentaglycyl murein peptidoglycan amidated threonine mark. The next 2 membrane-spanning stretches (helical) occupy residues 97–117 (FNPT…VLLV) and 130–152 (FLLL…TSQI). At 153–1856 (LSAYNSQLSI…TDDFRNSIYK (1704 aa)) the chain is on the extracellular side. Composition is skewed to polar residues over residues 254–267 (NLSS…QVEQ) and 286–295 (NPVSATTVQS). The interval 254 to 362 (NLSSNDSFAS…GEAAVREEEP (109 aa)) is disordered. Composition is skewed to basic and acidic residues over residues 322–334 (PGHE…REDL) and 351–361 (HEGEAAVREEE). The G5 domain maps to 417–496 (ALEVTTRNRT…NEVVKVGTLV (80 aa)). Zn(2+) is bound at residue His1502. The active site involves Glu1503. Zn(2+)-binding residues include His1506 and Glu1526.

The protein belongs to the peptidase M26 family. It depends on Zn(2+) as a cofactor. In terms of processing, the Gram-positive cell-wall anchor motif LPXTG is located in the N-terminal part, in contrast to such motifs in other known streptococcal and staphylococcal proteins. The protease could be cleaved by the sortase and anchored in the membrane via the two potential N-terminal transmembrane domains, whereas the propeptide located prior to the LPXTG motif would remain attached to the cell wall peptidoglycan by an amide bond.

Its subcellular location is the secreted. The protein localises to the cell wall. The protein resides in the membrane. Zinc metalloproteinase that specifically cleaves human matrix metalloproteinase 9 (MMP-9), leading to its activation. May play a role in pneumococcal virulence and pathogenicity in the lung. This chain is Zinc metalloprotease ZmpC (zmpC), found in Streptococcus pneumoniae serotype 4 (strain ATCC BAA-334 / TIGR4).